We begin with the raw amino-acid sequence, 440 residues long: Chromosomal replication initiator protein DnaA (440 aa).

Residues 1–69 (MKERILQEIK…VKVVLGNDAT (69 aa)) are domain I, interacts with DnaA modulators. Residues 69–96 (TFEITYEAFEPHSSYSEPLVKKRAVLLT) form a domain II region. Residues 97-313 (PLNPDYTFEN…GAIIKLLVYK (217 aa)) are domain III, AAA+ region. Positions 140, 142, 143, and 144 each coordinate ATP. The segment at 314–440 (ETTGKEVDLR…GEISKRALSG (127 aa)) is domain IV, binds dsDNA.

It belongs to the DnaA family. As to quaternary structure, oligomerizes as a right-handed, spiral filament on DNA at oriC.

Its subcellular location is the cytoplasm. In terms of biological role, plays an essential role in the initiation and regulation of chromosomal replication. ATP-DnaA binds to the origin of replication (oriC) to initiate formation of the DNA replication initiation complex once per cell cycle. Binds the DnaA box (a 9 base pair repeat at the origin) and separates the double-stranded (ds)DNA. Forms a right-handed helical filament on oriC DNA; dsDNA binds to the exterior of the filament while single-stranded (ss)DNA is stabiized in the filament's interior. The ATP-DnaA-oriC complex binds and stabilizes one strand of the AT-rich DNA unwinding element (DUE), permitting loading of DNA polymerase. After initiation quickly degrades to an ADP-DnaA complex that is not apt for DNA replication. Binds acidic phospholipids. In Thermotoga petrophila (strain ATCC BAA-488 / DSM 13995 / JCM 10881 / RKU-1), this protein is Chromosomal replication initiator protein DnaA.